A 321-amino-acid chain; its full sequence is Mechanosensory protein 3 (321 aa).

2 LIM zinc-binding domains span residues 27–86 (NKCN…DHSI) and 87–152 (HRCA…QMDD). The homeobox DNA-binding region spans 217–276 (RRGPRTTIKQNQLDVLNEMFSNTPKPSKHARAKLALETGLSMRVIQVWFQNRRSKERRLK).

As to quaternary structure, interacts with unc-86; the heterooligomer binds to the promoters of mec-3, mec-4 and mec-7. In terms of tissue distribution, expressed in the mechanosensory neurons ALML, ALMR, PLML, PLMR, AVM and PVM, and the FLPL and FLPR neurons.

It is found in the nucleus. Its function is as follows. Transcription factor. Specifies differentiation of the set of six touch receptor neurons (TRNs). May positively modulate expression of both its own gene and also of homeobox ARX homolog alr-1 in TRNs, forming a positive feedback loop with alr-1, thereby restricting the variability of expression of mec-3. Required to determine the identity of ALM sensory neurons, acting by interacting with unc-86, thereby preventing unc-86 cooperating with pag-3 to induce BDU-neuron specific genes. Binds cooperatively as a heterodimer with unc-86 to sites in the mec-3 gene promoter. Promotes outgrowth of lateral dendritic branches on the PVD nociceptive neurons, probably acting both directly, and upstream of zinc finger protein egl-46. In Caenorhabditis elegans, this protein is Mechanosensory protein 3 (mec-3).